A 497-amino-acid chain; its full sequence is 4,4'-diaponeurosporene oxygenase (497 aa).

7-19 (VIGGGLGGISAAI) lines the FAD pocket.

Belongs to the carotenoid/retinoid oxidoreductase family. CrtP subfamily. It depends on FAD as a cofactor.

It catalyses the reaction all-trans-4,4'-diaponeurosporene + 2 AH2 + 2 O2 = 4,4'-diaponeurosporenal + 2 A + 3 H2O. Its pathway is carotenoid biosynthesis; staphyloxanthin biosynthesis; staphyloxanthin from farnesyl diphosphate: step 3/5. Involved in the biosynthesis of the yellow-orange carotenoid staphyloxanthin, which plays a role in the virulence via its protective function against oxidative stress. Catalyzes the oxidation of the terminal methyl side group of 4,4'-diaponeurosporene to form 4,4'-diaponeurosporen-4-al. In Staphylococcus aureus (strain MW2), this protein is 4,4'-diaponeurosporene oxygenase.